The sequence spans 371 residues: MTLKNALLAFRNAINILDKNLINLLAKRKQLSLNIAHTKVKNNYPVRDIEREQMLLKNLTILGEKHFLNKKYIESLFSIILEDSVLTQKKWIKKYNLNKYKLEKISFLGSFGSYSHLAAQKYAKKHSKILTDKIYKNFSDVITSVEQQQSTYAILPIENQSSGLIIEVYKLLQKTPLFIIGNIYIHANHCLLAKKYTPILKIQKIYSHIQPFKQCSKFISLFPNWKLSNTTSTSEAIQHVAKENDNTIAALGNESYGELNKLEVIAKNISNKRNNITQFIILAQKKTYITNKKTHLKTIILISKKNENCEKIIRNILHKNKITLLKLKYYVTSKVLLEKIFFIEIENIYCIKHILKQFTIEIKCIKILGCF.

One can recognise a Chorismate mutase domain in the interval 1 to 92; the sequence is MTLKNALLAF…DSVLTQKKWI (92 aa). Positions 11, 28, 39, 48, 52, 84, and 88 each coordinate substrate. Residues 104-284 form the Prephenate dehydratase domain; it reads KISFLGSFGS…NITQFIILAQ (181 aa). The segment at 285–371 is regulatory; that stretch reads KKTYITNKKT…IKCIKILGCF (87 aa).

The protein localises to the cytoplasm. The enzyme catalyses chorismate = prephenate. It catalyses the reaction prephenate + H(+) = 3-phenylpyruvate + CO2 + H2O. The protein operates within amino-acid biosynthesis; L-phenylalanine biosynthesis; phenylpyruvate from prephenate: step 1/1. Its pathway is metabolic intermediate biosynthesis; prephenate biosynthesis; prephenate from chorismate: step 1/1. Its function is as follows. Catalyzes the Claisen rearrangement of chorismate to prephenate and the decarboxylation/dehydration of prephenate to phenylpyruvate. The sequence is that of Bifunctional chorismate mutase/prephenate dehydratase (pheA) from Buchnera aphidicola subsp. Baizongia pistaciae (strain Bp).